The chain runs to 88 residues: U18-hexatoxin-Hi1a (88 aa).

Positions methionine 1–alanine 17 are cleaved as a signal peptide. The propeptide occupies valine 18–arginine 47. Disulfide bonds link cysteine 48–cysteine 63, cysteine 55–cysteine 69, cysteine 62–cysteine 81, and cysteine 71–cysteine 79.

This sequence belongs to the neurotoxin 07 (Beta/delta-agtx) family. 02 (aga-3) subfamily. As to expression, expressed by the venom gland.

Its subcellular location is the secreted. Weak insecticidal toxin with probable ion channel impairing activity. In vivo, induces paralysis when injected into sheep blowflies (L.cuprina). Shows weak toxicity, since it is only toxic at high doses, and flies recover within 24 hours. The protein is U18-hexatoxin-Hi1a of Hadronyche infensa (Fraser island funnel-web spider).